Reading from the N-terminus, the 518-residue chain is ATP synthase subunit alpha (518 aa).

Residue 169–176 (GDRQTGKT) coordinates ATP.

This sequence belongs to the ATPase alpha/beta chains family. F-type ATPases have 2 components, CF(1) - the catalytic core - and CF(0) - the membrane proton channel. CF(1) has five subunits: alpha(3), beta(3), gamma(1), delta(1), epsilon(1). CF(0) has three main subunits: a(1), b(2) and c(9-12). The alpha and beta chains form an alternating ring which encloses part of the gamma chain. CF(1) is attached to CF(0) by a central stalk formed by the gamma and epsilon chains, while a peripheral stalk is formed by the delta and b chains.

The protein localises to the cell membrane. It carries out the reaction ATP + H2O + 4 H(+)(in) = ADP + phosphate + 5 H(+)(out). Functionally, produces ATP from ADP in the presence of a proton gradient across the membrane. The alpha chain is a regulatory subunit. The polypeptide is ATP synthase subunit alpha (Mycoplasma pneumoniae (strain ATCC 29342 / M129 / Subtype 1) (Mycoplasmoides pneumoniae)).